We begin with the raw amino-acid sequence, 102 residues long: Small ribosomal subunit protein uS10 (102 aa).

This sequence belongs to the universal ribosomal protein uS10 family. Part of the 30S ribosomal subunit.

In terms of biological role, involved in the binding of tRNA to the ribosomes. The polypeptide is Small ribosomal subunit protein uS10 (Bacillus anthracis (strain A0248)).